A 285-amino-acid chain; its full sequence is Orotidine 5'-phosphate decarboxylase (285 aa).

Substrate is bound by residues aspartate 40, 62–64 (KTH), 93–102 (DRKFVDIGST), tyrosine 235, and arginine 253. Lysine 95 (proton donor) is an active-site residue.

The protein belongs to the OMP decarboxylase family.

It catalyses the reaction orotidine 5'-phosphate + H(+) = UMP + CO2. Its pathway is pyrimidine metabolism; UMP biosynthesis via de novo pathway; UMP from orotate: step 2/2. In Paracoccidioides brasiliensis, this protein is Orotidine 5'-phosphate decarboxylase (URA3).